Here is a 273-residue protein sequence, read N- to C-terminus: Dermonecrotic toxin LdSicTox-alphaIB3aiv (273 aa).

Residue H5 is part of the active site. 2 residues coordinate Mg(2+): E25 and D27. The active-site Nucleophile is the H41. 2 disulfides stabilise this stretch: C45–C51 and C47–C190. D85 contacts Mg(2+).

The protein belongs to the arthropod phospholipase D family. Class II subfamily. Requires Mg(2+) as cofactor. Expressed by the venom gland.

It is found in the secreted. The enzyme catalyses an N-(acyl)-sphingosylphosphocholine = an N-(acyl)-sphingosyl-1,3-cyclic phosphate + choline. It catalyses the reaction an N-(acyl)-sphingosylphosphoethanolamine = an N-(acyl)-sphingosyl-1,3-cyclic phosphate + ethanolamine. It carries out the reaction a 1-acyl-sn-glycero-3-phosphocholine = a 1-acyl-sn-glycero-2,3-cyclic phosphate + choline. The catalysed reaction is a 1-acyl-sn-glycero-3-phosphoethanolamine = a 1-acyl-sn-glycero-2,3-cyclic phosphate + ethanolamine. Functionally, dermonecrotic toxins cleave the phosphodiester linkage between the phosphate and headgroup of certain phospholipids (sphingolipid and lysolipid substrates), forming an alcohol (often choline) and a cyclic phosphate. This toxin acts on sphingomyelin (SM). It may also act on ceramide phosphoethanolamine (CPE), lysophosphatidylcholine (LPC) and lysophosphatidylethanolamine (LPE), but not on lysophosphatidylserine (LPS), and lysophosphatidylglycerol (LPG). It acts by transphosphatidylation, releasing exclusively cyclic phosphate products as second products. Induces dermonecrosis, hemolysis, increased vascular permeability, edema, inflammatory response, and platelet aggregation. This Loxosceles deserta (Desert recluse spider) protein is Dermonecrotic toxin LdSicTox-alphaIB3aiv.